A 159-amino-acid polypeptide reads, in one-letter code: 17.7 kDa class I heat shock protein (159 aa).

Residues 45–159 form the sHSP domain; it reads DAAAFAGARI…PDVKSIQISG (115 aa).

The protein belongs to the small heat shock protein (HSP20) family. In terms of assembly, may form oligomeric structures.

The protein resides in the cytoplasm. The sequence is that of 17.7 kDa class I heat shock protein (HSP17.7) from Oryza sativa subsp. japonica (Rice).